The following is a 215-amino-acid chain: Methylthioribulose-1-phosphate dehydratase (215 aa).

Positions 103 and 105 each coordinate Zn(2+).

The protein belongs to the aldolase class II family. MtnB subfamily. Zn(2+) is required as a cofactor.

The catalysed reaction is 5-(methylsulfanyl)-D-ribulose 1-phosphate = 5-methylsulfanyl-2,3-dioxopentyl phosphate + H2O. It participates in amino-acid biosynthesis; L-methionine biosynthesis via salvage pathway; L-methionine from S-methyl-5-thio-alpha-D-ribose 1-phosphate: step 2/6. In terms of biological role, catalyzes the dehydration of methylthioribulose-1-phosphate (MTRu-1-P) into 2,3-diketo-5-methylthiopentyl-1-phosphate (DK-MTP-1-P). This Persephonella marina (strain DSM 14350 / EX-H1) protein is Methylthioribulose-1-phosphate dehydratase.